The sequence spans 325 residues: Secreted frizzled-related protein 3 (325 aa).

A signal peptide spans 1–32; the sequence is MVCGSPGGMLLLRAGLLALAALCLLRVPGARA. The 118-residue stretch at 33 to 150 folds into the FZ domain; it reads AACEPVRIPL…VYDRGVCISP (118 aa). 5 cysteine pairs are disulfide-bonded: cysteine 35-cysteine 96, cysteine 43-cysteine 89, cysteine 80-cysteine 119, cysteine 108-cysteine 147, and cysteine 112-cysteine 136. N-linked (GlcNAc...) asparagine glycosylation is present at asparagine 49. The NTR domain maps to 178–298; that stretch reads CKCKPIRATQ…WDMKLRHLGL (121 aa). Residues 297-325 form a disordered region; sequence GLSKSDSSNSDSTQSQKSGRNSNPRQARN. The span at 299–314 shows a compositional bias: low complexity; sequence SKSDSSNSDSTQSQKS. Residues 315-325 are compositionally biased toward polar residues; the sequence is GRNSNPRQARN.

It belongs to the secreted frizzled-related protein (sFRP) family. As to quaternary structure, interacts with MYOC. As to expression, expressed primarily in the cartilaginous cores of the long bone during embryonic and fetal development and in the appendicular skeleton (6-13 weeks). At 13 weeks of gestation, transcripts were present in early chondroblasts of the tarsal bones of the foot, the carpal bones of the hands and the epiphysis of long bones. Highly expressed in placenta and heart, followed by brain, skeletal muscle, kidney and pancreas. Weakly expressed in lung and liver.

It is found in the secreted. Functionally, soluble frizzled-related proteins (sFRPS) function as modulators of Wnt signaling through direct interaction with Wnts. They have a role in regulating cell growth and differentiation in specific cell types. SFRP3/FRZB appears to be involved in limb skeletogenesis. Antagonist of Wnt8 signaling. Regulates chondrocyte maturation and long bone development. The sequence is that of Secreted frizzled-related protein 3 (FRZB) from Homo sapiens (Human).